The sequence spans 430 residues: Histidine--tRNA ligase, chloroplastic (430 aa).

Belongs to the class-II aminoacyl-tRNA synthetase family.

It localises to the plastid. It is found in the chloroplast. It carries out the reaction tRNA(His) + L-histidine + ATP = L-histidyl-tRNA(His) + AMP + diphosphate + H(+). The protein is Histidine--tRNA ligase, chloroplastic (hisS) of Porphyra purpurea (Red seaweed).